Reading from the N-terminus, the 407-residue chain is MKRAFIMVLDSFGIGATADADRFGDVGSDTLGHIAEACAKGEADNGRKGPLNLPNLTRLGLVKAHEGSTGKIAAGMDGNADVIGAYAWAHELSSGKDTPSGHWEIAGVPVLFDWGYFSDHENSFPQELLDKLVKRANLPGYLGNCHSSGTVILDQLGEEHMKTGKPIFYTSADSVFQIACHEETFGLDKLYELCEIAREELTEGGYNIGRVIARPFIGDKAGNFQRTGNRHDLAVEPPAPTVLQKLVDEKQGHVVSVGKIADIYANCGITKKVKATGLDALFDATLKEMKEAGDKTIVFTNFVDFDSSWGHRRDIAGYAAGLELFDRRLPELMELVGEDDILILTADHGCDPSWTGTDHTREHIPVLIYGPKVKPGSLGHRETFADIGQTLATYFGTSPMDYGKNML.

Residues aspartate 10, aspartate 306, histidine 311, aspartate 347, histidine 348, and histidine 359 each coordinate Mn(2+).

It belongs to the phosphopentomutase family. The cofactor is Mn(2+).

It is found in the cytoplasm. It catalyses the reaction 2-deoxy-alpha-D-ribose 1-phosphate = 2-deoxy-D-ribose 5-phosphate. The enzyme catalyses alpha-D-ribose 1-phosphate = D-ribose 5-phosphate. Its pathway is carbohydrate degradation; 2-deoxy-D-ribose 1-phosphate degradation; D-glyceraldehyde 3-phosphate and acetaldehyde from 2-deoxy-alpha-D-ribose 1-phosphate: step 1/2. Isomerase that catalyzes the conversion of deoxy-ribose 1-phosphate (dRib-1-P) and ribose 1-phosphate (Rib-1-P) to deoxy-ribose 5-phosphate (dRib-5-P) and ribose 5-phosphate (Rib-5-P), respectively. This Salmonella gallinarum (strain 287/91 / NCTC 13346) protein is Phosphopentomutase.